We begin with the raw amino-acid sequence, 225 residues long: Platelet-derived growth factor subunit B (225 aa).

Residues 1–12 (LPLCCYLRLVSA) form the signal peptide. Residues 13–73 (EGDPIPEELY…ESESSSRGRR (61 aa)) constitute a propeptide, removed in mature form. N-linked (GlcNAc...) asparagine glycosylation is present at N55. 3 disulfides stabilise this stretch: C89–C133, C122–C170, and C126–C172. Residues 183-225 (RSPGTSREHRAKTPQTRVTVRTVRIRRPPKGKHRKFKHTHDKK) constitute a propeptide, removed in mature form.

The protein belongs to the PDGF/VEGF growth factor family. In terms of assembly, antiparallel homodimer; disulfide-linked. Antiparallel heterodimer with PDGFA; disulfide-linked. The PDGFB homodimer interacts with PDGFRA and PDGFRB homodimers, and with heterodimers formed by PDGFRA and PDGFRB. The heterodimer composed of PDGFA and PDGFB interacts with PDGFRB homodimers, and with heterodimers formed by PDGFRA and PDGFRB. Interacts with XLKD1. Interacts with LRP1. Interacts with SORL1 (via the N-terminal ectodomain). Interacts with CD82; this interaction inhibits PDGFB-mediated signaling pathway. Expressed in a distinct subpopulation of smooth muscle cells in injured arteries.

Its subcellular location is the secreted. Functionally, growth factor that plays an essential role in the regulation of embryonic development, cell proliferation, cell migration, survival and chemotaxis. Potent mitogen for cells of mesenchymal origin. Required for normal proliferation and recruitment of pericytes and vascular smooth muscle cells in the central nervous system, skin, lung, heart and placenta. Required for normal blood vessel development, and for normal development of kidney glomeruli. Plays an important role in wound healing. Signaling is modulated by the formation of heterodimers with PDGFA. The chain is Platelet-derived growth factor subunit B (Pdgfb) from Rattus norvegicus (Rat).